The sequence spans 582 residues: Membrane protein insertase YidC (582 aa).

Helical transmembrane passes span 4-24 (NTVL…YIQQ), 376-396 (IIPN…IIFF), 446-466 (ASGC…FGLF), and 542-562 (FMPL…LLFW).

This sequence belongs to the OXA1/ALB3/YidC family. Type 1 subfamily. Interacts with the Sec translocase complex via SecD. Specifically interacts with transmembrane segments of nascent integral membrane proteins during membrane integration.

The protein resides in the cell inner membrane. Its function is as follows. Required for the insertion and/or proper folding and/or complex formation of integral membrane proteins into the membrane. Involved in integration of membrane proteins that insert both dependently and independently of the Sec translocase complex, as well as at least some lipoproteins. Aids folding of multispanning membrane proteins. The polypeptide is Membrane protein insertase YidC (Treponema denticola (strain ATCC 35405 / DSM 14222 / CIP 103919 / JCM 8153 / KCTC 15104)).